The primary structure comprises 338 residues: Peptidyl-prolyl cis-trans isomerase cyp11 (338 aa).

One can recognise a PPIase cyclophilin-type domain in the interval 7-172 (FFDIDVDGNR…HNVMIANCGE (166 aa)). The segment at 186-338 (ASAVSDESED…RGRFKYRPTY (153 aa)) is disordered. Positions 208–218 (DDSSSDEDSEE) are enriched in acidic residues. Positions 223-242 (RTKKKRSRKHSKKDKKKKKR) are enriched in basic residues. Residues 243 to 309 (ESSNRKRSPE…PEKRSSERRV (67 aa)) are compositionally biased toward basic and acidic residues. The segment covering 329–338 (RGRFKYRPTY) has biased composition (basic residues).

This sequence belongs to the cyclophilin-type PPIase family.

The enzyme catalyses [protein]-peptidylproline (omega=180) = [protein]-peptidylproline (omega=0). PPIases accelerate the folding of proteins. It catalyzes the cis-trans isomerization of proline imidic peptide bonds in oligopeptides. The polypeptide is Peptidyl-prolyl cis-trans isomerase cyp11 (cyp11) (Rhizopus delemar (strain RA 99-880 / ATCC MYA-4621 / FGSC 9543 / NRRL 43880) (Mucormycosis agent)).